A 113-amino-acid chain; its full sequence is Seminal vesicle secretory protein 4 (113 aa).

Positions 1–21 are cleaved as a signal peptide; the sequence is MNSTSLFLFSLLLLLVTGAIG. Residues 31–113 are disordered; sequence SEETVRESFS…KSRFSQDALE (83 aa). Low complexity-rich tracts occupy residues 38–50 and 83–98; these read SFSM…MSRS and IISS…GESS.

It belongs to the SVP2/SVP5/SVP6 family. In terms of tissue distribution, testis.

Its subcellular location is the secreted. It localises to the extracellular space. The polypeptide is Seminal vesicle secretory protein 4 (Svs4) (Mus musculus (Mouse)).